The primary structure comprises 1366 residues: DNA-directed RNA polymerase subunit beta' (1366 aa).

Positions 1–23 (MTSSKPKKSSRVRKTTKNSKKNH) are enriched in basic residues. The disordered stretch occupies residues 1–37 (MTSSKPKKSSRVRKTTKNSKKNHNTMMPLLPKTPPSF). Residues Cys-248, Cys-315, Cys-322, and Cys-325 each coordinate Zn(2+). Positions 1304–1366 (TAILDDPSDE…LQEEGLLSDG (63 aa)) are disordered. The segment covering 1354–1366 (LEGLQEEGLLSDG) has biased composition (low complexity).

It belongs to the RNA polymerase beta' chain family. RpoC2 subfamily. As to quaternary structure, in cyanobacteria the RNAP catalytic core is composed of 2 alpha, 1 beta, 1 beta', 1 gamma and 1 omega subunit. When a sigma factor is associated with the core the holoenzyme is formed, which can initiate transcription. Zn(2+) is required as a cofactor.

The enzyme catalyses RNA(n) + a ribonucleoside 5'-triphosphate = RNA(n+1) + diphosphate. DNA-dependent RNA polymerase catalyzes the transcription of DNA into RNA using the four ribonucleoside triphosphates as substrates. The polypeptide is DNA-directed RNA polymerase subunit beta' (Prochlorococcus marinus subsp. pastoris (strain CCMP1986 / NIES-2087 / MED4)).